Consider the following 324-residue polypeptide: tRNA pseudouridine synthase B (324 aa).

The active-site Nucleophile is Asp-49. A disordered region spans residues 87–107; that stretch reads RSTDDLEGQPTKTSDKRPSRE.

The protein belongs to the pseudouridine synthase TruB family. Type 1 subfamily.

It catalyses the reaction uridine(55) in tRNA = pseudouridine(55) in tRNA. Functionally, responsible for synthesis of pseudouridine from uracil-55 in the psi GC loop of transfer RNAs. The chain is tRNA pseudouridine synthase B from Brucella canis (strain ATCC 23365 / NCTC 10854 / RM-666).